A 145-amino-acid chain; its full sequence is Putative type I specificity subunit S.MpnORF289P C-terminus (145 aa).

This sequence belongs to the type-I restriction system S methylase family. As to quaternary structure, the methyltransferase is composed of M and S polypeptides.

Functionally, the C-terminal section of a specificity (S) subunit of a type I methyltransferase (MTase); this subunit dictates DNA sequence specificity. The single R subunit has multiple frameshifts and is probably not expressed. This is Putative type I specificity subunit S.MpnORF289P C-terminus from Mycoplasma pneumoniae (strain ATCC 29342 / M129 / Subtype 1) (Mycoplasmoides pneumoniae).